Here is a 141-residue protein sequence, read N- to C-terminus: ATP synthase epsilon chain 1 (141 aa).

Belongs to the ATPase epsilon chain family. As to quaternary structure, F-type ATPases have 2 components, CF(1) - the catalytic core - and CF(0) - the membrane proton channel. CF(1) has five subunits: alpha(3), beta(3), gamma(1), delta(1), epsilon(1). CF(0) has three main subunits: a, b and c.

The protein localises to the cell inner membrane. Functionally, produces ATP from ADP in the presence of a proton gradient across the membrane. The sequence is that of ATP synthase epsilon chain 1 from Paraburkholderia xenovorans (strain LB400).